A 73-amino-acid polypeptide reads, in one-letter code: uncharacterized protein (73 aa).

This is an uncharacterized protein from Haemophilus influenzae (strain ATCC 51907 / DSM 11121 / KW20 / Rd).